Reading from the N-terminus, the 194-residue chain is Sigma factor AlgU negative regulatory protein (194 aa).

The helical transmembrane segment at 89-105 (LAVAASVTLAVLAGVRL) threads the bilayer.

The protein belongs to the RseA family.

Its subcellular location is the cell membrane. Functionally, negative regulator of the sigma factor AlgU. Plays a role in the differentiation of P.aeruginosa into the alginate-producing form. Inactivation of mucA causes a switch from the non-mucoid to mucoid state resulting in constitutive expression of alginate biosynthetic genes. This is Sigma factor AlgU negative regulatory protein (mucA) from Pseudomonas aeruginosa (strain ATCC 15692 / DSM 22644 / CIP 104116 / JCM 14847 / LMG 12228 / 1C / PRS 101 / PAO1).